The chain runs to 274 residues: Thymidylate synthase (274 aa).

Residue arginine 21 coordinates dUMP. Residue histidine 51 coordinates (6R)-5,10-methylene-5,6,7,8-tetrahydrofolate. 123 to 124 (RR) contributes to the dUMP binding site. Cysteine 156 functions as the Nucleophile in the catalytic mechanism. Residues 176-179 (RSAD), asparagine 187, and 217-219 (HIY) contribute to the dUMP site. Residue aspartate 179 coordinates (6R)-5,10-methylene-5,6,7,8-tetrahydrofolate. Residue serine 273 participates in (6R)-5,10-methylene-5,6,7,8-tetrahydrofolate binding.

This sequence belongs to the thymidylate synthase family. Bacterial-type ThyA subfamily. In terms of assembly, homodimer.

Its subcellular location is the cytoplasm. The enzyme catalyses dUMP + (6R)-5,10-methylene-5,6,7,8-tetrahydrofolate = 7,8-dihydrofolate + dTMP. The protein operates within pyrimidine metabolism; dTTP biosynthesis. Its function is as follows. Catalyzes the reductive methylation of 2'-deoxyuridine-5'-monophosphate (dUMP) to 2'-deoxythymidine-5'-monophosphate (dTMP) while utilizing 5,10-methylenetetrahydrofolate (mTHF) as the methyl donor and reductant in the reaction, yielding dihydrofolate (DHF) as a by-product. This enzymatic reaction provides an intracellular de novo source of dTMP, an essential precursor for DNA biosynthesis. This Francisella tularensis subsp. novicida (strain U112) protein is Thymidylate synthase.